Reading from the N-terminus, the 588-residue chain is Oxidoreductase NdmD (588 aa).

The 106-residue stretch at W9–T114 folds into the Rieske domain. [2Fe-2S] cluster is bound by residues C50, H52, C69, and H72. Residues P272–V373 form the FAD-binding FR-type domain. A 2Fe-2S ferredoxin-type domain is found at Y503–L588. C537, C542, C545, and C575 together coordinate [2Fe-2S] cluster.

The cofactor is [2Fe-2S] cluster.

Involved in the caffeine degradation, which is the essential first step for assimilating the carbon and nitrogen in caffeine. Catalyzes the oxidation of NADH and transfers electrons to NdmA and NdmB, which catalyze the N-demethylation reactions. This Pseudomonas putida (Arthrobacter siderocapsulatus) protein is Oxidoreductase NdmD (ndmD).